The following is a 68-amino-acid chain: Neuronal regeneration-related protein (68 aa).

Interacts with FLNA. Interacts with the latency-associated peptides (LAP) of TGFB1 and TGFB2; the interaction results in a decrease in TGFB autoinduction. In terms of processing, phosphorylated on Ser-59. Phosphorylation decreases stability and activity.

It is found in the cytoplasm. In terms of biological role, may have roles in neural function. Ectopic expression promotes axonal regeneration. Also augments motility of gliomas. May also have roles in cellular differentiation. Induces differentiation of fibroblast into myofibroblast and myofibroblast ameboid migration. Increases retinoic-acid regulation of lipid-droplet biogenesis. Down-regulates the expression of TGFB1 and TGFB2 but not of TGFB3. May play a role in the regulation of alveolar generation. This Rattus norvegicus (Rat) protein is Neuronal regeneration-related protein (Nrep).